The chain runs to 133 residues: Capsid protein (133 aa).

Belongs to the Leviviricetes capsid protein family. In terms of assembly, homodimer. The homodimers binds to the viral RNA via an operator hairpin, but also to many other RNA sequences in the viral genome; this interaction probably shifts the virus from the replicative to the assembly phase and ensures specific encapsidation of the viral genome. Interacts with the maturation protein A2.

The protein localises to the virion. Capsid protein self-assembles to form an icosahedral capsid with a T=3 symmetry, about 26 nm in diameter, and consisting of 89 capsid proteins dimers (178 capsid proteins). Involved in viral genome encapsidation through the interaction between a capsid protein dimer and the multiple packaging signals present in the RNA genome. Binding of the capsid proteins to the viral RNA induces a conformational change required for efficient T=3 shell formation. The capsid also contains 1 copy of the A2 maturation protein. Its function is as follows. Acts as a translational repressor of viral replicase synthesis late in infection. This latter function is the result of capsid protein interaction with an RNA hairpin which contains the replicase ribosome-binding site. In Escherichia virus Qbeta (Bacteriophage Q-beta), this protein is Capsid protein.